A 225-amino-acid chain; its full sequence is PKHD-type hydroxylase YbiX (225 aa).

In terms of domain architecture, Fe2OG dioxygenase spans 78–177 (TLSTPLFNRY…RVASFMWIQS (100 aa)). Positions 96, 98, and 158 each coordinate Fe cation. Arg-168 provides a ligand contact to 2-oxoglutarate.

Requires Fe(2+) as cofactor. L-ascorbate is required as a cofactor.

The polypeptide is PKHD-type hydroxylase YbiX (Escherichia coli O45:K1 (strain S88 / ExPEC)).